Reading from the N-terminus, the 236-residue chain is Phosphoribosylaminoimidazole-succinocarboxamide synthase (236 aa).

It belongs to the SAICAR synthetase family.

The catalysed reaction is 5-amino-1-(5-phospho-D-ribosyl)imidazole-4-carboxylate + L-aspartate + ATP = (2S)-2-[5-amino-1-(5-phospho-beta-D-ribosyl)imidazole-4-carboxamido]succinate + ADP + phosphate + 2 H(+). The protein operates within purine metabolism; IMP biosynthesis via de novo pathway; 5-amino-1-(5-phospho-D-ribosyl)imidazole-4-carboxamide from 5-amino-1-(5-phospho-D-ribosyl)imidazole-4-carboxylate: step 1/2. The chain is Phosphoribosylaminoimidazole-succinocarboxamide synthase from Cellvibrio japonicus (strain Ueda107) (Pseudomonas fluorescens subsp. cellulosa).